Reading from the N-terminus, the 397-residue chain is uncharacterized protein (397 aa).

Disordered regions lie at residues 159–203 and 221–397; these read LNSS…KSTI and NSVK…KTKN. The span at 221-240 shows a compositional bias: low complexity; the sequence is NSVKSSPSKSFVSISSPVQS. Polar residues-rich tracts occupy residues 285-309 and 320-330; these read TSTL…SSST and VNPNSTSSVTF. A DNA-binding region (zn(2)-C6 fungal-type) is located at residues 342 to 371; the sequence is CSRCKKSKKGCDRQRPCGRCRDAGLNSEDC. The segment covering 350 to 363 has biased composition (basic and acidic residues); the sequence is KGCDRQRPCGRCRD. A compositionally biased stretch (basic residues) spans 383-397; it reads RKPRGRGRGRPKTKN.

It localises to the nucleus. This is an uncharacterized protein from Schizosaccharomyces pombe (strain 972 / ATCC 24843) (Fission yeast).